We begin with the raw amino-acid sequence, 838 residues long: Outer membrane usher protein YraJ (838 aa).

Residues 1 to 40 (MPQRHHQGHKRTPKQLALIIKRCLPMVLTGSGMLCTTANA) form the signal peptide. Cysteines 815 and 837 form a disulfide.

The protein belongs to the fimbrial export usher family.

The protein resides in the cell outer membrane. Functionally, part of the yraHIJK fimbrial operon. Could contribute to adhesion to various surfaces in specific environmental niches. Increases adhesion to eukaryotic T24 bladder epithelial cells in the absence of fim operon. Probably involved in the export and assembly of fimbrial subunits across the outer membrane. The chain is Outer membrane usher protein YraJ (yraJ) from Escherichia coli (strain K12).